The sequence spans 317 residues: Ribonuclease H2 subunit A (317 aa).

The 228-residue stretch at 43–270 (PCCLGVDEAG…AKDMLETKGG (228 aa)) folds into the RNase H type-2 domain. Aspartate 49, glutamate 50, and aspartate 166 together coordinate a divalent metal cation.

The protein belongs to the RNase HII family. Eukaryotic subfamily. Requires Mn(2+) as cofactor. Mg(2+) is required as a cofactor.

It catalyses the reaction Endonucleolytic cleavage to 5'-phosphomonoester.. Its function is as follows. Endonuclease that specifically degrades the RNA of RNA-DNA hybrids. Participates in DNA replication. The chain is Ribonuclease H2 subunit A (rnh-201) from Neurospora crassa (strain ATCC 24698 / 74-OR23-1A / CBS 708.71 / DSM 1257 / FGSC 987).